The chain runs to 686 residues: Methionine--tRNA ligase (686 aa).

A 'HIGH' region motif is present at residues 15 to 25 (PYANGSIHLGH). Cys-146, Cys-149, Cys-159, and Cys-162 together coordinate Zn(2+). The 'KMSKS' region motif lies at 332-336 (KMSKS). Residue Lys-335 participates in ATP binding. Residues 585 to 686 (AFAAVDMRIA…EGAQPGMRVM (102 aa)) form the tRNA-binding domain.

This sequence belongs to the class-I aminoacyl-tRNA synthetase family. MetG type 1 subfamily. As to quaternary structure, homodimer. Zn(2+) is required as a cofactor.

Its subcellular location is the cytoplasm. It catalyses the reaction tRNA(Met) + L-methionine + ATP = L-methionyl-tRNA(Met) + AMP + diphosphate. Its function is as follows. Is required not only for elongation of protein synthesis but also for the initiation of all mRNA translation through initiator tRNA(fMet) aminoacylation. This is Methionine--tRNA ligase from Vibrio campbellii (strain ATCC BAA-1116).